Reading from the N-terminus, the 226-residue chain is Peroxynitrite isomerase (226 aa).

A GXWXGXG motif is present at residues 21 to 27 (GSWEGQG). Position 191 (H191) interacts with heme b. Residues 201 to 226 (SAAEGRLAPGAERPRGAGGRKQGEQS) form a disordered region.

The protein belongs to the nitrobindin family. As to quaternary structure, homodimer. The cofactor is heme b.

It catalyses the reaction peroxynitrite = nitrate. Its pathway is nitrogen metabolism. In terms of biological role, heme-binding protein able to scavenge peroxynitrite and to protect free L-tyrosine against peroxynitrite-mediated nitration, by acting as a peroxynitrite isomerase that converts peroxynitrite to nitrate. Therefore, this protein likely plays a role in peroxynitrite sensing and in the detoxification of reactive nitrogen and oxygen species (RNS and ROS, respectively). Is able to bind nitric oxide (NO) in vitro, but may act as a sensor of peroxynitrite levels in vivo. This chain is Peroxynitrite isomerase, found in Micrococcus luteus (strain ATCC 4698 / DSM 20030 / JCM 1464 / CCM 169 / CCUG 5858 / IAM 1056 / NBRC 3333 / NCIMB 9278 / NCTC 2665 / VKM Ac-2230) (Micrococcus lysodeikticus).